The following is a 431-amino-acid chain: Glutamate-1-semialdehyde 2,1-aminomutase (431 aa).

At K269 the chain carries N6-(pyridoxal phosphate)lysine.

Belongs to the class-III pyridoxal-phosphate-dependent aminotransferase family. HemL subfamily. In terms of assembly, homodimer. It depends on pyridoxal 5'-phosphate as a cofactor.

Its subcellular location is the cytoplasm. The enzyme catalyses (S)-4-amino-5-oxopentanoate = 5-aminolevulinate. Its pathway is porphyrin-containing compound metabolism; protoporphyrin-IX biosynthesis; 5-aminolevulinate from L-glutamyl-tRNA(Glu): step 2/2. It functions in the pathway porphyrin-containing compound metabolism; chlorophyll biosynthesis. This Chlorobium chlorochromatii (strain CaD3) protein is Glutamate-1-semialdehyde 2,1-aminomutase.